The chain runs to 279 residues: GDT1-like protein 3 (279 aa).

A signal peptide spans 1-23; it reads MDPNPRLLILLVLLAFSATVAVA. Helical transmembrane passes span 64–84, 103–123, 135–155, 186–206, 224–244, and 258–278; these read VGPG…VSEI, IVLS…TGLG, TNSA…YIAW, FFGR…FLAE, AIGV…LAVI, and VATI…FYPP.

The protein belongs to the GDT1 family.

It is found in the membrane. In Oryza sativa subsp. japonica (Rice), this protein is GDT1-like protein 3.